The primary structure comprises 159 residues: Ribosomal RNA large subunit methyltransferase H (159 aa).

Residues leucine 76, glycine 107, and 126 to 131 (LSKLTM) each bind S-adenosyl-L-methionine.

Belongs to the RNA methyltransferase RlmH family. In terms of assembly, homodimer.

The protein localises to the cytoplasm. The enzyme catalyses pseudouridine(1915) in 23S rRNA + S-adenosyl-L-methionine = N(3)-methylpseudouridine(1915) in 23S rRNA + S-adenosyl-L-homocysteine + H(+). Specifically methylates the pseudouridine at position 1915 (m3Psi1915) in 23S rRNA. The protein is Ribosomal RNA large subunit methyltransferase H of Acinetobacter baylyi (strain ATCC 33305 / BD413 / ADP1).